We begin with the raw amino-acid sequence, 198 residues long: Holliday junction branch migration complex subunit RuvA (198 aa).

Residues 1-63 form a domain I region; sequence MYDYIKGQLT…EDAHLLFGFH (63 aa). Positions 64-142 are domain II; the sequence is TEDEKDVFLK…EAPQETGNTK (79 aa). The tract at residues 143-147 is flexible linker; that stretch reads ARSNK. The interval 148–198 is domain III; that stretch reads AGNTQLDEAIEALLALGYKAAELKKIRAFFEGTSETAEQYIKSALKLLMKG.

This sequence belongs to the RuvA family. In terms of assembly, homotetramer. Forms an RuvA(8)-RuvB(12)-Holliday junction (HJ) complex. HJ DNA is sandwiched between 2 RuvA tetramers; dsDNA enters through RuvA and exits via RuvB. An RuvB hexamer assembles on each DNA strand where it exits the tetramer. Each RuvB hexamer is contacted by two RuvA subunits (via domain III) on 2 adjacent RuvB subunits; this complex drives branch migration. In the full resolvosome a probable DNA-RuvA(4)-RuvB(12)-RuvC(2) complex forms which resolves the HJ.

Its subcellular location is the cytoplasm. Its function is as follows. The RuvA-RuvB-RuvC complex processes Holliday junction (HJ) DNA during genetic recombination and DNA repair, while the RuvA-RuvB complex plays an important role in the rescue of blocked DNA replication forks via replication fork reversal (RFR). RuvA specifically binds to HJ cruciform DNA, conferring on it an open structure. The RuvB hexamer acts as an ATP-dependent pump, pulling dsDNA into and through the RuvAB complex. HJ branch migration allows RuvC to scan DNA until it finds its consensus sequence, where it cleaves and resolves the cruciform DNA. The protein is Holliday junction branch migration complex subunit RuvA of Streptococcus pyogenes serotype M28 (strain MGAS6180).